Reading from the N-terminus, the 81-residue chain is Cytochrome b559 subunit alpha (81 aa).

Residues V21–W35 form a helical membrane-spanning segment. H23 contributes to the heme binding site.

Belongs to the PsbE/PsbF family. Heterodimer of an alpha subunit and a beta subunit. PSII is composed of 1 copy each of membrane proteins PsbA, PsbB, PsbC, PsbD, PsbE, PsbF, PsbH, PsbI, PsbJ, PsbK, PsbL, PsbM, PsbT, PsbX, PsbY, PsbZ, Psb30/Ycf12, peripheral proteins PsbO, CyanoQ (PsbQ), PsbU, PsbV and a large number of cofactors. It forms dimeric complexes. Heme b serves as cofactor.

The protein localises to the cellular thylakoid membrane. This b-type cytochrome is tightly associated with the reaction center of photosystem II (PSII). PSII is a light-driven water:plastoquinone oxidoreductase that uses light energy to abstract electrons from H(2)O, generating O(2) and a proton gradient subsequently used for ATP formation. It consists of a core antenna complex that captures photons, and an electron transfer chain that converts photonic excitation into a charge separation. The chain is Cytochrome b559 subunit alpha from Synechococcus sp. (strain JA-2-3B'a(2-13)) (Cyanobacteria bacterium Yellowstone B-Prime).